Reading from the N-terminus, the 349-residue chain is Transmembrane protein 255A (349 aa).

Helical transmembrane passes span 30-50 (IYVTVTLLIVSVLILTVGLAA), 57-77 (VTVGGYYPGVILGFGSFLGII), 89-109 (LVASIVFISFGVIAAFCCAIV), and 226-246 (TILNIVGLFLGIITAAVLGGF). Positions 301–329 (VFPSSPPSGLSDEPQSASPSPSYMWSSSA) are disordered. Over residues 316–329 (SASPSPSYMWSSSA) the composition is skewed to low complexity.

Belongs to the TMEM255 family.

It is found in the membrane. In Macaca fascicularis (Crab-eating macaque), this protein is Transmembrane protein 255A (TMEM255A).